Reading from the N-terminus, the 343-residue chain is Cell division protein ZipA (343 aa).

Topologically, residues 1–4 are periplasmic; that stretch reads MDLN. The chain crosses the membrane as a helical span at residues 5–25; the sequence is TILIILGILALIGLVAHGIWS. The Cytoplasmic portion of the chain corresponds to 26 to 343; sequence NRREKSQYFD…MAEAAYLARV (318 aa). The interval 39–98 is disordered; that stretch reads AFHRNPQSTGRPSAQASQPMTPNFAQPAKETEQIRQTYQEPQVRQMSSSPEQQTRPTAQA. Polar residues-rich tracts occupy residues 43–62 and 72–95; these read NPQS…TPNF and IRQT…TRPT.

The protein belongs to the ZipA family. In terms of assembly, interacts with FtsZ via their C-terminal domains.

Its subcellular location is the cell inner membrane. Its function is as follows. Essential cell division protein that stabilizes the FtsZ protofilaments by cross-linking them and that serves as a cytoplasmic membrane anchor for the Z ring. Also required for the recruitment to the septal ring of downstream cell division proteins. The polypeptide is Cell division protein ZipA (Actinobacillus succinogenes (strain ATCC 55618 / DSM 22257 / CCUG 43843 / 130Z)).